The primary structure comprises 351 residues: Histidinol-phosphate aminotransferase (351 aa).

Lys221 is subject to N6-(pyridoxal phosphate)lysine.

This sequence belongs to the class-II pyridoxal-phosphate-dependent aminotransferase family. Histidinol-phosphate aminotransferase subfamily. In terms of assembly, homodimer. It depends on pyridoxal 5'-phosphate as a cofactor.

It carries out the reaction L-histidinol phosphate + 2-oxoglutarate = 3-(imidazol-4-yl)-2-oxopropyl phosphate + L-glutamate. It participates in amino-acid biosynthesis; L-histidine biosynthesis; L-histidine from 5-phospho-alpha-D-ribose 1-diphosphate: step 7/9. The chain is Histidinol-phosphate aminotransferase from Staphylococcus epidermidis (strain ATCC 12228 / FDA PCI 1200).